Consider the following 942-residue polypeptide: MKISEKWQKEWENKRVFDATPDPNKKKFFTTIAFPYPNSPFHLGHGRTYVTGDIYARYMRMRGYNVLFPMAFHYTGTPIIAMADDVAKGDKELIDIFKSIYEIPDDVISKLVDPLFMANYFKEEIKQAMKEIGLSIDWRREFTTIDPEFSSFIIWQFRKLQEKGFIVRDTHPVGWCPVHHIPVGMHDTKGDMEPEIGEFVLIYFDSDMGILPVATLRPETVFGAIAVWVNPHESYSIVEIDGKKYVMSEKASSKLSFQIDNLKVITVVKGSELVKHSAVNPITGKEVPIIGANFVDPLTGTGVVMSVPAHAPFDYFYLKKTKSELSIISVIRVEGMGETLAKDLVEKSNPQNDNDLKKLTEQVYRIEYNKGVMIDITKLVKPEYVEELKPLVNLPVPAARQKITEFITQKGLGRKIYEIMNRPVYCRCGNEVVVKILKDQWFLDYGNQEWKDLARKSIESIRFIPPEIKKDFEFVVDWLQKRACARTRGLGTPLPWDKKWIIESLSDSTIYMAFYTIAHRLKEHKLKPSQLTYEFWEYIMLGNGNPDEISKISGIPVEVIKAMRDEFLYWYPLDVRHSGKDLVPNHLSFFIFNHAAIFPHQLWPKGIAVNGFVLYDGKKMSKSLRNIVPLRKAIRMYSPDVIRIALTTNADIGSDVNFSDSYAKSIIDTLKNYYDLLEKLKEFKGEDEGFPEKWLKSKFYQMVINVTQYMDSLDLRSSSNEILYNFSSYINEYFELVRSEGREPNGKLLSQILQIWIKLLSPFAPHFAEELWHKIGKNTLVSLESWPIIDQSNVDLFIDLTHTYHRKLLNDIQAILSVYKDTPKSIKIFVANKEFLNVLRDAINIVQKGGQLRQLMEIHKPKGKQDARLYQKIYEEAREIDDDMKKLVTNFDFDEKDLLDKGLKYLSYKLGIKEIRILDASEMDRTKYNKDALPLRPAIIIE.

The short motif at 35 to 45 (PYPNSPFHLGH) is the 'HIGH' region element. The short motif at 619–623 (KMSKS) is the 'KMSKS' region element. Lysine 622 provides a ligand contact to ATP.

Belongs to the class-I aminoacyl-tRNA synthetase family.

Its subcellular location is the cytoplasm. It catalyses the reaction tRNA(Leu) + L-leucine + ATP = L-leucyl-tRNA(Leu) + AMP + diphosphate. This is Leucine--tRNA ligase 2 from Sulfolobus acidocaldarius (strain ATCC 33909 / DSM 639 / JCM 8929 / NBRC 15157 / NCIMB 11770).